Reading from the N-terminus, the 115-residue chain is NADH-ubiquinone oxidoreductase chain 3 (115 aa).

The next 3 membrane-spanning stretches (helical) occupy residues 4 to 24 (LLTM…AFWL), 55 to 75 (FFLV…LLPI), and 84 to 104 (INTM…GLAY).

This sequence belongs to the complex I subunit 3 family. In terms of assembly, core subunit of respiratory chain NADH dehydrogenase (Complex I) which is composed of 45 different subunits. Interacts with TMEM186. Interacts with TMEM242.

The protein localises to the mitochondrion inner membrane. It catalyses the reaction a ubiquinone + NADH + 5 H(+)(in) = a ubiquinol + NAD(+) + 4 H(+)(out). Functionally, core subunit of the mitochondrial membrane respiratory chain NADH dehydrogenase (Complex I) which catalyzes electron transfer from NADH through the respiratory chain, using ubiquinone as an electron acceptor. Essential for the catalytic activity of complex I. The chain is NADH-ubiquinone oxidoreductase chain 3 from Neotoma lepida (Desert woodrat).